A 338-amino-acid chain; its full sequence is Glyceraldehyde-3-phosphate dehydrogenase (338 aa).

Residues Arg-13, Ile-14, Asp-35, Arg-80, and Ser-123 each coordinate NAD(+). D-glyceraldehyde 3-phosphate-binding residues include Ser-152, Cys-153, Thr-154, Thr-183, Arg-198, Thr-212, Gly-213, and Arg-235. Cys-153 serves as the catalytic Nucleophile. NAD(+) is bound at residue Asn-317.

It belongs to the glyceraldehyde-3-phosphate dehydrogenase family. As to quaternary structure, homotetramer.

Its subcellular location is the tegument membrane. The enzyme catalyses D-glyceraldehyde 3-phosphate + phosphate + NAD(+) = (2R)-3-phospho-glyceroyl phosphate + NADH + H(+). The protein operates within carbohydrate degradation; glycolysis; pyruvate from D-glyceraldehyde 3-phosphate: step 1/5. Its function is as follows. This antigen is associated with human resistance to schistosomiasis. This chain is Glyceraldehyde-3-phosphate dehydrogenase, found in Schistosoma mansoni (Blood fluke).